A 318-amino-acid chain; its full sequence is MVFFPHRHLIGIKGLTEQDITYLLDKADEAVKISRQREKKTSTLRGLTQINLFFEASTRTQASFELAGKRLGADVMNMSVGNSSVKKGETLIDTAMTLNAMRPDVLVIRHSSAGAAALLAQKVSCSVVNAGDGQHEHPTQALLDALTIRRAKGKLSRIIVAICGDVLHSRVARSNILLLNAMGARVRVVAPATLLPAGIAEMGVEVFHSMREGLKDADVVMMLRLQRERMSGAFVPSVREYYHFYGLDAETLKAAKDDALVMHPGPMNRGVEIASEVADGPQSVIAEQVEMGVAVRMAVMETLLVSQNQGPRSDGMMA.

Residues arginine 59 and threonine 60 each contribute to the carbamoyl phosphate site. Lysine 87 contacts L-aspartate. Carbamoyl phosphate contacts are provided by arginine 109, histidine 137, and glutamine 140. L-aspartate-binding residues include arginine 170 and arginine 224. 2 residues coordinate carbamoyl phosphate: glycine 265 and proline 266.

It belongs to the aspartate/ornithine carbamoyltransferase superfamily. ATCase family. As to quaternary structure, heterododecamer (2C3:3R2) of six catalytic PyrB chains organized as two trimers (C3), and six regulatory PyrI chains organized as three dimers (R2).

The enzyme catalyses carbamoyl phosphate + L-aspartate = N-carbamoyl-L-aspartate + phosphate + H(+). It participates in pyrimidine metabolism; UMP biosynthesis via de novo pathway; (S)-dihydroorotate from bicarbonate: step 2/3. Its function is as follows. Catalyzes the condensation of carbamoyl phosphate and aspartate to form carbamoyl aspartate and inorganic phosphate, the committed step in the de novo pyrimidine nucleotide biosynthesis pathway. The sequence is that of Aspartate carbamoyltransferase catalytic subunit from Rhizobium johnstonii (strain DSM 114642 / LMG 32736 / 3841) (Rhizobium leguminosarum bv. viciae).